The following is a 202-amino-acid chain: Tetranectin (202 aa).

The first 21 residues, 1–21 (MELWGPCVLLCLFSLLTQVTA), serve as a signal peptide directing secretion. 3 disulfides stabilise this stretch: Cys-71–Cys-81, Cys-98–Cys-197, and Cys-173–Cys-189. Positions 77–198 (VHMKCFLAFV…CRDKLPYVCQ (122 aa)) constitute a C-type lectin domain.

In terms of assembly, homotrimer.

It is found in the secreted. Its function is as follows. Tetranectin binds to plasminogen and to isolated kringle 4. May be involved in the packaging of molecules destined for exocytosis. Plays a role in retinal function. The protein is Tetranectin (CLEC3B) of Bos taurus (Bovine).